The sequence spans 263 residues: Regulatory protein RecX (263 aa).

Belongs to the RecX family.

Its subcellular location is the cytoplasm. In terms of biological role, modulates RecA activity. This Bacillus velezensis (strain DSM 23117 / BGSC 10A6 / LMG 26770 / FZB42) (Bacillus amyloliquefaciens subsp. plantarum) protein is Regulatory protein RecX.